Consider the following 549-residue polypeptide: Neutral amino acid transporter 9 (549 aa).

The interval 1–27 is disordered; it reads MDEDSKPLLGSVPTGDYYTDSLDPKQR. Residues 1-107 are Cytoplasmic-facing; the sequence is MDEDSKPLLG…GGDSPIKNPS (107 aa). A helical transmembrane segment spans residues 108 to 128; it reads IVTIFAIWNTMMGTSILSIPW. Residues 117 to 122 are important for arginine binding and amino acid transport; sequence TMMGTS. Ser-122 is a binding site for arginine. Over 129–134 the chain is Lumenal; sequence GIKQAG. The helical transmembrane segment at 135–155 threads the bilayer; it reads FTLGIIIIVLMGLLTLYCCYR. Topologically, residues 156–186 are cytoplasmic; it reads VLKSTKSIPYVDTSDWEFPDVCKYYFGGFGK. Residues 187–213 form a helical membrane-spanning segment; the sequence is WSSLVFSLVSLIGAMVVYWVLMSNFLF. The Lumenal segment spans residues 214-271; it reads NTGKFIFNYVHNVNTSDAFGTNGTERVICPYPDVDPHGNSSTSLYSGSDNSTGLEFDH. Asn-227, Asn-235, Asn-252, and Asn-263 each carry an N-linked (GlcNAc...) asparagine glycan. A disulfide bridge connects residues Cys-242 and Cys-412. A helical membrane pass occupies residues 272–288; that stretch reads WWSKTNTIPFYLILLLL. Residues 289-297 are Cytoplasmic-facing; it reads PLLNFRSAS. A helical transmembrane segment spans residues 298-322; sequence FFARFTFLGTISVIYLIFLVTYKAI. Over 323 to 344 the chain is Lumenal; it reads QLGFHLEFHWFDSSMFFVPEFR. A helical membrane pass occupies residues 345–365; sequence TLFPQLSGVLTLAFFIHNCII. The Cytoplasmic portion of the chain corresponds to 366 to 382; it reads TLMKNNKHQENNVRDLS. Residues 383-403 traverse the membrane as a helical segment; that stretch reads LAYLLVGLTYLYVGVLIFAAF. At 404–425 the chain is on the lumenal side; the sequence is PSPPLSKECIEPNFLDNFPSSD. A helical transmembrane segment spans residues 426-446; sequence ILVFVARTFLLFQMTTVYPLL. The CARC motif signature appears at 432-442; it reads RTFLLFQMTTV. The CRAC motif signature appears at 445–451; that stretch reads LLGYLVR. At 447–467 the chain is on the cytoplasmic side; sequence GYLVRVQLMGQIFGNHYPGFL. Residues 468-488 traverse the membrane as a helical segment; it reads HVFVLNVFVVGAGVLMARFYP. Over 489-495 the chain is Lumenal; the sequence is NIGSIIR. A helical membrane pass occupies residues 496 to 516; it reads YSGALCGLALVFVLPSLIHMV. Topologically, residues 517–528 are cytoplasmic; the sequence is SLKRRGELRWTS. Residues 529–549 form a helical membrane-spanning segment; it reads TLFHGFLILLGVANLLGQFFM.

This sequence belongs to the amino acid/polyamine transporter 2 family. SLC38A9 subfamily. As to quaternary structure, associated component of the Ragulator complex. Associated component of the Rag GTPases heterodimers (RRAGA and RRAGC). In terms of processing, glycosylated.

The protein localises to the lysosome membrane. It is found in the late endosome membrane. The catalysed reaction is L-leucine(in) = L-leucine(out). It carries out the reaction L-tyrosine(in) = L-tyrosine(out). The enzyme catalyses L-glutamine(out) = L-glutamine(in). It catalyses the reaction L-asparagine(out) = L-asparagine(in). With respect to regulation, amino acid transport activity is increased by sodium. Transport of L-glutamine, leucine and tyrosine is increased by arginine binding. In terms of biological role, lysosomal amino acid transporter involved in the activation of mTORC1 in response to amino acid levels. Probably acts as an amino acid sensor of the Rag GTPases and Ragulator complexes, 2 complexes involved in amino acid sensing and activation of mTORC1, a signaling complex promoting cell growth in response to growth factors, energy levels, and amino acids. Following activation by amino acids, the Ragulator and Rag GTPases function as a scaffold recruiting mTORC1 to lysosomes where it is in turn activated. SLC38A9 mediates transport of amino acids with low capacity and specificity with a slight preference for polar amino acids. Acts as an arginine sensor. Following activation by arginine binding, mediates transport of L-glutamine, leucine and tyrosine with high efficiency, and is required for the efficient utilization of these amino acids after lysosomal protein degradation. However, the transport mechanism is not well defined and the role of sodium is not clear. Guanine exchange factor (GEF) that, upon arginine binding, stimulates GDP release from RRAGA and therefore activates the Rag GTPase heterodimer and the mTORC1 pathway in response to nutrient sufficiency. This is Neutral amino acid transporter 9 from Danio rerio (Zebrafish).